A 382-amino-acid polypeptide reads, in one-letter code: S-adenosylmethionine decarboxylase proenzyme (382 aa).

Position 32 (Phe-32) interacts with substrate. Residues Glu-33 and Glu-36 contribute to the active site. Leu-87 lines the substrate pocket. Residue Ser-90 is the Schiff-base intermediate with substrate; via pyruvic acid of the active site. Ser-90 is modified (pyruvic acid (Ser); by autocatalysis). The active-site Proton donor; for catalytic activity is the Cys-104. A substrate-binding site is contributed by Phe-248. Catalysis depends on proton acceptor; for processing activity residues Ser-254 and His-267. Glu-271 serves as a coordination point for substrate.

It belongs to the eukaryotic AdoMetDC family. In terms of assembly, heterotetramer of two alpha and two beta chains. It depends on pyruvate as a cofactor. In terms of processing, is synthesized initially as an inactive proenzyme. Formation of the active enzyme involves a self-maturation process in which the active site pyruvoyl group is generated from an internal serine residue via an autocatalytic post-translational modification. Two non-identical subunits are generated from the proenzyme in this reaction, and the pyruvate is formed at the N-terminus of the alpha chain, which is derived from the carboxyl end of the proenzyme. The post-translation cleavage follows an unusual pathway, termed non-hydrolytic serinolysis, in which the side chain hydroxyl group of the serine supplies its oxygen atom to form the C-terminus of the beta chain, while the remainder of the serine residue undergoes an oxidative deamination to produce ammonia and the pyruvoyl group blocking the N-terminus of the alpha chain.

The catalysed reaction is S-adenosyl-L-methionine + H(+) = S-adenosyl 3-(methylsulfanyl)propylamine + CO2. It participates in amine and polyamine biosynthesis; S-adenosylmethioninamine biosynthesis; S-adenosylmethioninamine from S-adenosyl-L-methionine: step 1/1. The polypeptide is S-adenosylmethionine decarboxylase proenzyme (Leishmania donovani).